The chain runs to 66 residues: DNA gyrase inhibitor YacG (66 aa).

Zn(2+) is bound by residues Cys10, Cys13, Cys29, and Cys33.

It belongs to the DNA gyrase inhibitor YacG family. Interacts with GyrB. The cofactor is Zn(2+).

Inhibits all the catalytic activities of DNA gyrase by preventing its interaction with DNA. Acts by binding directly to the C-terminal domain of GyrB, which probably disrupts DNA binding by the gyrase. In Edwardsiella ictaluri (strain 93-146), this protein is DNA gyrase inhibitor YacG.